The following is a 296-amino-acid chain: Protease HtpX homolog (296 aa).

The next 2 membrane-spanning stretches (helical) occupy residues 14–34 (VVLL…VGYL) and 39–59 (YQFG…SMIF). Histidine 143 contacts Zn(2+). The active site involves glutamate 144. Zn(2+) is bound at residue histidine 147. A run of 2 helical transmembrane segments spans residues 158–178 (IAVA…RMLF) and 195–215 (ILVL…ASLV). Glutamate 224 serves as a coordination point for Zn(2+).

It belongs to the peptidase M48B family. It depends on Zn(2+) as a cofactor.

The protein localises to the cell membrane. This is Protease HtpX homolog from Streptococcus agalactiae serotype Ia (strain ATCC 27591 / A909 / CDC SS700).